The sequence spans 274 residues: Pyrroline-5-carboxylate reductase 3 (274 aa).

Position 2 is an N-acetylalanine (alanine 2).

It belongs to the pyrroline-5-carboxylate reductase family. As to quaternary structure, homodecamer; composed of 5 homodimers.

It is found in the cytoplasm. It catalyses the reaction L-proline + NADP(+) = (S)-1-pyrroline-5-carboxylate + NADPH + 2 H(+). The enzyme catalyses L-proline + NAD(+) = (S)-1-pyrroline-5-carboxylate + NADH + 2 H(+). It functions in the pathway amino-acid biosynthesis; L-proline biosynthesis; L-proline from L-glutamate 5-semialdehyde: step 1/1. Oxidoreductase that catalyzes the last step in proline biosynthesis, which corresponds to the reduction of pyrroline-5-carboxylate (P5C) to L-proline using NAD(P)H. Proline is synthesized from either glutamate or ornithine; both are converted to P5C, and then to proline via pyrroline-5-carboxylate reductases (PYCRs). PYCR3 is exclusively linked to the biosynthesis of proline from ornithine. The protein is Pyrroline-5-carboxylate reductase 3 of Rattus norvegicus (Rat).